A 602-amino-acid chain; its full sequence is UvrABC system protein C (602 aa).

The GIY-YIG domain occupies 17–94 (KTSGCYKMYS…IKKYKPTYNI (78 aa)). One can recognise a UVR domain in the interval 199–234 (SKLLNDIEIKMKEVIMKENFEAAIKLKETKKSLIEI).

It belongs to the UvrC family. In terms of assembly, interacts with UvrB in an incision complex.

It localises to the cytoplasm. Functionally, the UvrABC repair system catalyzes the recognition and processing of DNA lesions. UvrC both incises the 5' and 3' sides of the lesion. The N-terminal half is responsible for the 3' incision and the C-terminal half is responsible for the 5' incision. The protein is UvrABC system protein C of Borrelia duttonii (strain Ly).